The sequence spans 2542 residues: Ankyrin repeat and KH domain-containing protein 1 (2542 aa).

Residue methionine 1 is modified to N-acetylmethionine. The segment covering 1–10 has biased composition (gly residues); sequence MLTDSGGGGT. Disordered regions lie at residues 1–44 and 50–69; these read MLTD…IRTV and AGPASGVGSSGGGGSGSGTG. A compositionally biased stretch (low complexity) spans 20–29; the sequence is APRSAPAGAS. Gly residues predominate over residues 57–69; the sequence is GSSGGGGSGSGTG. Residues serine 101 and serine 105 each carry the phosphoserine modification. 15 ANK repeats span residues 204–233, 237–266, 271–300, 304–333, 337–366, 371–400, 404–433, 437–466, 470–499, 504–533, 534–563, 567–596, 600–629, 634–663, and 667–696; these read VDTRSLAEACSDGDVNAVRKLLDEGRSVNE, EGESLLCLACSAGYYELAQVLLAMHANVED, GDITPLMAASSGGYLDIVKLLLLHDADVNS, TGNTALTYACAGGFVDIVKVLLNEGANIED, NGHTPLMEAASAGHVEVARVLLDHGAGINT, FKESALTLACYKGHLDMVRFLLEAGADQEH, EMHTALMEACMDGHVEVARLLLDSGAQVNM, SFESPLTLAACGGHVELAALLIERGANLEE, EGYTPLMEAAREGHEEMVALLLAQGANINA, TQETALTLACCGGFSEVADFLIKAGADIEL, GCSTPLMEASQEGHLELVKYLLASGANVHA, TGDTALTYACENGHTDVADVLLQAGADLEH, GGRTPLMKAARAGHLCTVQFLISKGANVNR, NDHTVVSLACAGGHLAVVELLLAHGADPTH, and DGSTMLIEAAKGGHTNVVSYLLDYPNNVLS. Positions 775 to 852 form a coiled coil; it reads LECIVEETEG…RQLQMKTQQQ (78 aa). Position 803 is a phosphoserine (serine 803). 10 ANK repeats span residues 1054 to 1083, 1087 to 1116, 1121 to 1150, 1154 to 1183, 1189 to 1218, 1223 to 1252, 1256 to 1285, 1291 to 1320, 1324 to 1353, and 1357 to 1386; these read NHDTALTLACAGGHEELVSVLIARDAKIEH, KGFTPLILAATAGHVGVVEILLDKGGDIEA, TKDTPLSLACSGGRQEVVDLLLARGANKEH, SDYTPLSLAASGGYVNIIKILLNAGAEINS, LGISPLMLAAMNGHVPAVKLLLDMGSDINA, NRNTALTLACFQGRAEVVSLLLDRKANVEH, TGLTPLMEAASGGYAEVGRVLLDKGADVNA, SRDTALTIAADKGHYKFCELLIHRGAHIDV, KGNTPLWLASNGGHFDVVQLLVQAGADVDA, and RKITPLMSAFRKGHVKVVQYLVKEVNQFPS. Residues 1415–1485 adopt a coiled-coil conformation; sequence KAKDQQAAEA…ENKPKENSEL (71 aa). 3 disordered regions span residues 1441-1517, 1534-1614, and 1632-1664; these read REES…TIGI, NVVT…SQEL, and SQEEKTSTATSKTQTRLEGEVTPNSLSTSYKTV. The segment covering 1453–1463 has biased composition (basic residues); sequence REKRKEKRKKK. The span at 1464–1483 shows a compositional bias: basic and acidic residues; sequence KEEQKRKQEEDEENKPKENS. Positions 1484-1502 are enriched in acidic residues; sequence ELPEDEDEEENDEDVEQEV. The segment covering 1503–1517 has biased composition (low complexity); the sequence is PIEPPSATTTTTIGI. A Phosphoserine modification is found at serine 1540. The residue at position 1553 (threonine 1553) is a Phosphothreonine. Over residues 1590-1603 the composition is skewed to low complexity; the sequence is NSDSDNLDSTDCNS. Residues 1604–1614 are compositionally biased toward polar residues; the sequence is ESSSGGKSQEL. Serine 1632 is modified (phosphoserine). The segment covering 1638–1664 has biased composition (polar residues); the sequence is STATSKTQTRLEGEVTPNSLSTSYKTV. Phosphothreonine is present on threonine 1653. The region spanning 1695–1759 is the KH domain; it reads RRSKKLSVPA…ESTRYAVQLI (65 aa). Disordered regions lie at residues 1886 to 1923, 1987 to 2106, and 2260 to 2367; these read NTWGPFPVRPVNPGNTNSSPKHNNTSRLPNQNGTVLPS, PSVS…APLT, and NMHP…IPPP. Residues 1898 to 1922 are compositionally biased toward polar residues; it reads PGNTNSSPKHNNTSRLPNQNGTVLP. Residues 1987 to 1996 are compositionally biased toward low complexity; the sequence is PSVSSAPITS. Over residues 1997-2019 the composition is skewed to polar residues; sequence GQAPTTFLPASTSQAQLSSQKME. Residues 2042 to 2077 show a composition bias toward low complexity; that stretch reads CTPSSTANSCSSSASNTPGAPETHPSSSPTPTSSNT. Residues 2078-2106 show a composition bias toward polar residues; it reads QEEAQPSSVSDLSPMSMPFASNSEPAPLT. Low complexity-rich tracts occupy residues 2285–2308 and 2337–2349; these read LPSIDPSGSSPSSSSAPLASFSGI and TSASNSSTSAPPT.

This sequence belongs to the mask family. In terms of assembly, interacts with PTPN11. Isoform 2 interacts with HIV-1 VPR. Interacts with NOD2. As to expression, ubiquitous with high expression in cervix, spleen and brain. Expressed in hematopoietic cells with increased expression in leukemia cells. Isoform 2 is highly expressed in spleen with almost no expression in muscle and brain.

The protein resides in the cytoplasm. Functionally, may play a role as a scaffolding protein that may be associated with the abnormal phenotype of leukemia cells. Isoform 2 may possess an antiapoptotic effect and protect cells during normal cell survival through its regulation of caspases. This is Ankyrin repeat and KH domain-containing protein 1 (ANKHD1) from Homo sapiens (Human).